Reading from the N-terminus, the 818-residue chain is Sodium/hydrogen exchanger 1 (818 aa).

The Extracellular segment spans residues 1–98 (MLLWSGICGL…FPVLGIDYTH (98 aa)). The disordered stretch occupies residues 39–76 (PSPTASTIRGSEPPRERSIGDVTTAPPELAPESRPVNH). Asparagine 75 carries N-linked (GlcNAc...) asparagine glycosylation. A helical transmembrane segment spans residues 99 to 121 (VRTPFEISLWILLACLMKIGFHV). Over 122 to 130 (IPTISSIVP) the chain is Cytoplasmic. A helical transmembrane segment spans residues 131 to 148 (ESCLLIVVGLLVGGLIKA). Residues 149-158 (VGETPPFLQS) are Extracellular-facing. A helical membrane pass occupies residues 159 to 176 (EVFFLFLLPPIILDAGYF). At 177–186 (LPLRQFTENL) the chain is on the cytoplasmic side. A helical transmembrane segment spans residues 187–215 (GTILIFAVVGTLWNAFFLGGLMYAVCLVG). Residues 216–222 (GEQINNI) lie on the Extracellular side of the membrane. The chain crosses the membrane as a helical span at residues 223–249 (GLLDNLLFGSIISAVDPVAVLAVFEEI). The Cytoplasmic segment spans residues 250–252 (HIN). A helical transmembrane segment spans residues 253–283 (ELLHILVFGESLLNDAVTVVLYHLFEEFANY). The Extracellular portion of the chain corresponds to 284–287 (DRVG). A helical membrane pass occupies residues 288–322 (IVDIVLGFLSFFVVSLGGVFVGVVYGVIAAFTSRF). Residues 323–328 (TSHIRV) lie on the Cytoplasmic side of the membrane. Residues 329 to 341 (IEPLFVFLYSYMA) traverse the membrane as a helical segment. Residues 342 to 350 (YLSAELFHL) are Extracellular-facing. A helical transmembrane segment spans residues 351–371 (SGIMALIASGVVMRPYVEANI). Over 372–373 (SH) the chain is Cytoplasmic. The helical transmembrane segment at 374–404 (KSHTTIKYFLKMWSSVSETLIFIFLGVSTVA) threads the bilayer. Over 405–410 (GSHHWN) the chain is Extracellular. A helical membrane pass occupies residues 411-438 (WTFVISTLLFCLIARVLGVLGLTWFINK). Residues 439-444 (FRIVKL) are Cytoplasmic-facing. Residues 445-469 (TPKDQFIIAYGGLRGAIAFSLGHLL) form a helical membrane-spanning segment. Residues 470 to 475 (DKNHFP) lie on the Extracellular side of the membrane. A helical transmembrane segment spans residues 476 to 505 (MCDLFLTAIITVIFFTVFVQGMTIRPLVDL). The segment at 503-545 (VDLLAVKKKQETKRSINEEIHTQFLDHLLTGIEDICGHYGHHH) is interaction with TESC. Residues 506–818 (LAVKKKQETK…EGEPFIPKGQ (313 aa)) lie on the Cytoplasmic side of the membrane. Residues 509-516 (KKKQETKR) are PI(4,5)P2-binding region. Residues 515–545 (KRSINEEIHTQFLDHLLTGIEDICGHYGHHH) form an interaction with CHP2 region. The interval 540 to 545 (HYGHHH) is confers pH-dependent PI(4,5)P2 binding. The interval 552–560 (RFNKKYVKK) is PI(4,5)P2-binding region. A phosphoserine mark is found at serine 599 and serine 602. Residue threonine 603 is modified to Phosphothreonine. Residues serine 605 and serine 648 each carry the phosphoserine modification. The interval 633–818 (KILRNNLQKT…EGEPFIPKGQ (186 aa)) is interaction with TESC. Residues 633-818 (KILRNNLQKT…EGEPFIPKGQ (186 aa)) are interaction with CALM1. The interaction with PPP3CA stretch occupies residues 684 to 687 (LTVP). Phosphoserine is present on residues serine 693, serine 697, and serine 703. An interaction with PPP3CA region spans residues 715–720 (PVITID). Serine 723, serine 726, and serine 729 each carry phosphoserine. The segment at 739–818 (GKVLGLSREP…EGEPFIPKGQ (80 aa)) is disordered. A phosphothreonine mark is found at threonine 752 and threonine 782. Residues 785–794 (PSDSPSSQRI) are compositionally biased toward polar residues. Residues serine 788, serine 790, and serine 799 each carry the phosphoserine modification.

It belongs to the monovalent cation:proton antiporter 1 (CPA1) transporter (TC 2.A.36) family. As to quaternary structure, homodimer; dimerization is crucial for its function. Oligomer. Interacts with CALM in a calcium-dependent manner. Interacts with TESC. Interacts (via the juxtamembrane region of the cytoplasmic C-terminal domain) with CHP1; the interaction occurs at the plasma membrane in a calcium-dependent manner. Interacts with CHP2; the interaction occurs in a calcium-dependent manner. Interacts with EZR; regulates the cytoskeletal interactions of SLC9A1 and promotes stress fiber formation. Post-translationally, ubiquitinated, leading to its degradation by the proteasome. Ubiquitination is reduced by CHP1. In terms of processing, O-glycosylated. Palmitoylated; may play a major role in SLC9A1 regulation. Post-translationally, phosphorylation at Thr-782 increases SLC9A1 activity. Specifically dephosphorylated at Thr-782 by PPP3CA that negatively regulates SLC9A1 activity. Phosphorylation at Ser-648 by AKT1 reduces SLC9A1 binding to CALM1.

Its subcellular location is the cell membrane. It is found in the basolateral cell membrane. It catalyses the reaction Na(+)(in) + H(+)(out) = Na(+)(out) + H(+)(in). The enzyme catalyses Li(+)(out) + H(+)(in) = Li(+)(in) + H(+)(out). The catalysed reaction is Li(+)(in) + Na(+)(out) = Li(+)(out) + Na(+)(in). With respect to regulation, activated at acidic pHs. Inhibited by cariporide and eniporide. Inhibited by amiloride and 5-amino-substituted derivatives. Phosphatidylinositol 4,5-bisphosphate (PI(4,5)P2) and phosphatidylinositol 3,4,5-trisphosphate (PI(3,4,5)P3) bind and differentially regulate SLC9A1 activity. Functionally, electroneutral Na(+) /H(+) antiporter that extrudes Na(+) in exchange for external protons driven by the inward sodium ion chemical gradient, protecting cells from acidification that occurs from metabolism. Exchanges intracellular H(+) ions for extracellular Na(+) in 1:1 stoichiometry. Plays a key role in maintening intracellular pH neutral and cell volume, and thus is important for cell growth, proliferation, migration and survival. In addition, can transport lithium Li(+) and also functions as a Na(+)/Li(+) antiporter. SLC9A1 also functions in membrane anchoring and organization of scaffolding complexes that coordinate signaling inputs. The protein is Sodium/hydrogen exchanger 1 (SLC9A1) of Sus scrofa (Pig).